Consider the following 122-residue polypeptide: Large ribosomal subunit protein uL14c (122 aa).

Belongs to the universal ribosomal protein uL14 family. Part of the 50S ribosomal subunit.

The protein localises to the plastid. It is found in the cyanelle. Its function is as follows. Binds to 23S rRNA. In Cyanophora paradoxa, this protein is Large ribosomal subunit protein uL14c.